Reading from the N-terminus, the 201-residue chain is ATP-dependent Clp protease proteolytic subunit (201 aa).

The active-site Nucleophile is the Ser100. His125 is an active-site residue.

The protein belongs to the peptidase S14 family. As to quaternary structure, component of the chloroplastic Clp protease core complex.

It is found in the plastid. It localises to the chloroplast stroma. The catalysed reaction is Hydrolysis of proteins to small peptides in the presence of ATP and magnesium. alpha-casein is the usual test substrate. In the absence of ATP, only oligopeptides shorter than five residues are hydrolyzed (such as succinyl-Leu-Tyr-|-NHMec, and Leu-Tyr-Leu-|-Tyr-Trp, in which cleavage of the -Tyr-|-Leu- and -Tyr-|-Trp bonds also occurs).. Cleaves peptides in various proteins in a process that requires ATP hydrolysis. Has a chymotrypsin-like activity. Plays a major role in the degradation of misfolded proteins. This Ranunculus macranthus (Large buttercup) protein is ATP-dependent Clp protease proteolytic subunit.